Here is a 617-residue protein sequence, read N- to C-terminus: MEPIPPSNGNKNNSMDKQPQQPQQPQQQQQQQQQQRRDQRNSKLNELNETERVRNRFISHEFHKLDRTKSRIDAPKISFSDSESESDSEFFLAKRNTNNNNQNNTSPTFSSANGKQSNLTQRKINTQIQSKQPTNNNVQPLTDDEGTINHSNHHHHHHNQNNNGNNNNNNNNNNNNNKISTPPKQEEKMTMNGLFTLRPSILSSESNGSSYRGFLNLLLILLITASFRLVILNHLLYGIRINLDLYKISEYHRWPGVMISLMINLFIIAAYLIEKAAAKQLLPDRICYLLRIINCAAVIIVPSGSIIAFSPNPASGIIVMILICTFSMKIISYAYENSKQRKLNPDNKKFVIDPTNTSIYPNNLSLRSTYWFMLVPTLVYQLSYPRSPKIRKGYLLRRIVEALSLSLLILWMVNQYMLPLVQNSIEPLEKIDIVLIVERIMKLSLPNLYVWLLGFYVFFHLYLNIVAEITRFGDREFYRDWWNSTGLDYFWRTWNMPVHHWMVVLIYTPMRRRGFSKNMGYFMCFFVSAIFHELVISIPFHSLKLWGFFGIMSQMVLIALTKNLMNGRNLGNVIFWISIVLGQPLVVLLYYRNFVLENPEWYRNVEPPTSPPVMPFY.

2 disordered regions span residues 1-52 and 95-186; these read MEPI…ETER and RNTN…PKQE. Polar residues predominate over residues 7 to 17; that stretch reads SNGNKNNSMDK. Low complexity-rich tracts occupy residues 18–34 and 96–105; these read QPQQ…QQQQ and NTNNNNQNNT. The segment covering 106-140 has biased composition (polar residues); it reads SPTFSSANGKQSNLTQRKINTQIQSKQPTNNNVQP. Over residues 160-177 the composition is skewed to low complexity; the sequence is QNNNGNNNNNNNNNNNNN. The next 5 helical transmembrane spans lie at 217–237, 254–274, 306–326, 399–419, and 449–469; these read LLLI…HLLY, WPGV…YLIE, IIAF…ICTF, IVEA…YMLP, and YVWL…VAEI. The FYXDWWN motif signature appears at 477 to 483; sequence FYRDWWN. Transmembrane regions (helical) follow at residues 520 to 540, 545 to 565, and 570 to 590; these read GYFM…SIPF, LWGF…KNLM, and LGNV…VLLY. The active site involves H532.

The protein belongs to the membrane-bound acyltransferase family. Sterol o-acyltransferase subfamily.

It localises to the endoplasmic reticulum membrane. It catalyses the reaction an acyl-CoA + a 1,2-diacyl-sn-glycerol = a triacyl-sn-glycerol + CoA. It carries out the reaction all-trans-retinol + an acyl-CoA = an all-trans-retinyl ester + CoA. The enzyme catalyses 2-(9Z-octadecenoyl)-glycerol + (9Z)-octadecenoyl-CoA = 1,2-di-(9Z-octadecenoyl)-sn-glycerol + CoA. The catalysed reaction is 1,2-di-(9Z-octadecenoyl)-sn-glycerol + (9Z)-octadecenoyl-CoA = 1,2,3-tri-(9Z-octadecenoyl)-glycerol + CoA. It catalyses the reaction all-trans-retinol + hexadecanoyl-CoA = all-trans-retinyl hexadecanoate + CoA. It carries out the reaction 1-O-(9Z-octadecenyl)-glycerol + (9Z)-octadecenoyl-CoA = 1-O-(9Z-octadecyl)-3-(9Z-octadecenoyl)-glycerol + CoA. The enzyme catalyses 1-O-(9Z-octadecyl)-3-(9Z-octadecenoyl)-glycerol + (9Z)-octadecenoyl-CoA = 1-O-(9Z-octadecenyl)-2,3-di-(9Z-octadecenoyl)glycerol + CoA. The catalysed reaction is 1-(9Z-octadecenoyl)-glycerol + (9Z)-octadecenoyl-CoA = 1,2-di-(9Z-octadecenoyl)-glycerol + CoA. It catalyses the reaction 1,2-di-(9Z-octadecenoyl)-glycerol + (9Z)-octadecenoate + H(+) = 1,2,3-tri-(9Z-octadecenoyl)-glycerol + H2O. It carries out the reaction 1-octadecanoyl-2-(5Z,8Z,11Z,14Z-eicosatetraenoyl)-sn-glycerol + (9Z)-octadecenoyl-CoA = 1-octadecanoyl-2-(5Z,8Z,11Z,14Z)-eicosatetraenoyl-3-(9Z)-octadecenoyl-sn-glycerol + CoA. The enzyme catalyses hexadecane-1,2-diol + 2 hexadecanoyl-CoA = 1,2-O,O-dihexadecanoyl-1,2-hexadecanediol + 2 CoA. The catalysed reaction is hexadecane-1,2-diol + hexadecanoyl-CoA = 2-hydroxyhexadecyl hexadecanoate + CoA. It catalyses the reaction 2-(9Z-octadecenoyl)-glycerol + hexadecanoyl-CoA = 1-hexadecanoyl-2-(9Z-octadecenoyl)-sn-glycerol + CoA. It carries out the reaction 1,2-di-(9Z-octadecenoyl)-sn-glycerol + hexadecanoyl-CoA = 1,2-di-(9Z)-octadecenoyl-3-hexadecanoyl-sn-glycerol + CoA. The enzyme catalyses hexadecan-1-ol + hexadecanoyl-CoA = hexadecanyl hexadecanoate + CoA. The catalysed reaction is 13-cis-retinol + hexadecanoyl-CoA = 13-cis-retinyl hexadecanoate + CoA. It catalyses the reaction 1,3-di-(9Z-octadecenoyl)-glycerol + (9Z)-octadecenoyl-CoA = 1,2,3-tri-(9Z-octadecenoyl)-glycerol + CoA. It carries out the reaction 2,3-di-(9Z)-octadecenoyl-sn-glycerol + (9Z)-octadecenoyl-CoA = 1,2,3-tri-(9Z-octadecenoyl)-glycerol + CoA. It functions in the pathway lipid metabolism; glycerolipid metabolism. Its function is as follows. Catalyzes the terminal and only committed step in triacylglycerol synthesis by using diacylglycerol and fatty acyl CoA as substrates. The protein is Diacylglycerol O-acyltransferase 1 (dgat1) of Dictyostelium discoideum (Social amoeba).